The following is a 100-amino-acid chain: Urease subunit gamma (100 aa).

This sequence belongs to the urease gamma subunit family. In terms of assembly, heterotrimer of UreA (gamma), UreB (beta) and UreC (alpha) subunits. Three heterotrimers associate to form the active enzyme.

It localises to the cytoplasm. The catalysed reaction is urea + 2 H2O + H(+) = hydrogencarbonate + 2 NH4(+). Its pathway is nitrogen metabolism; urea degradation; CO(2) and NH(3) from urea (urease route): step 1/1. This is Urease subunit gamma from Ruegeria pomeroyi (strain ATCC 700808 / DSM 15171 / DSS-3) (Silicibacter pomeroyi).